The chain runs to 380 residues: Spore coat protein B (380 aa).

Residues 224–364 (GPKGSYKKED…SSGKQKEDYS (141 aa)) are disordered. Residues 229–248 (YKKEDQKNEQNQEDNNDKDS) are compositionally biased toward basic and acidic residues. Composition is skewed to low complexity over residues 275–288 (SKSG…SSSK), 296–315 (SSDY…SSSK), and 338–356 (SSDY…IKSS).

The chain is Spore coat protein B (cotB) from Bacillus subtilis (strain 168).